We begin with the raw amino-acid sequence, 928 residues long: BCAS3 microtubule associated cell migration factor (928 aa).

Met-1 carries the post-translational modification N-acetylmethionine. A WD repeat occupies 69 to 114; it reads DLNDTSRNLEFHEIHSTGNEPPLLIMIGYSDGMQVWSIPISGEAQE. A Glycyl lysine isopeptide (Lys-Gly) (interchain with G-Cter in SUMO1); alternate cross-link involves residue Lys-215. Lys-215 participates in a covalent cross-link: Glycyl lysine isopeptide (Lys-Gly) (interchain with G-Cter in SUMO2); alternate. 2 required for recruitment to preautophagosomal structure in response to mitophagy regions span residues 254 to 312 and 437 to 560; these read RGGA…SRRS and YGGQ…IKAP. Phosphoserine occurs at positions 461, 480, and 488. Disordered stretches follow at residues 472–515 and 755–777; these read TSKQ…PGNP and TTVISSSSSVLQSHGPSDTPQPL. Low complexity-rich tracts occupy residues 480 to 494, 505 to 514, and 755 to 771; these read SPVPGLSSSPSGSPL, NNFTNNNPGN, and TTVISSSSSVLQSHGPS. Phosphoserine is present on residues Ser-838, Ser-886, and Ser-898. The interval 868-928 is disordered; the sequence is ESPSRDVVGS…PLSLFPTGFP (61 aa). The span at 887–901 shows a compositional bias: low complexity; that stretch reads IETLSNSSGSTSGSI.

It belongs to the BCAS3 family. In terms of assembly, interacts with histone H3, ESR1, KAT2B and PELP1; the interactions occur in a estrogen-dependent manner. Interacts with beta-tubulin and VIM. Interacts (via C-terminal) with PHAF1; the interaction is requrired for the association with the phagophore. Expressed in stomach, liver, lung, kidney, prostate, testis, thyroid gland, adrenal gland, brain, heart, skeletal muscle, colon, spleen, small intestine, placenta, blood leukocyte and mammary epithelial cells. Expressed in undifferentiated ES cells. Expressed in blood islands and nascent blood vessels derived from differentiated ES cells into embryoid bodies (BD). Expressed in endothelial cells. Not detected in brain. Expressed in brain tumors (at protein level). Expressed in brain. Highly expressed in breast cancers and in glioma cell lines.

It localises to the nucleus. The protein localises to the cytoplasm. It is found in the cytoskeleton. The protein resides in the preautophagosomal structure. Functionally, plays a role in angiogenesis. Participates in the regulation of cell polarity and directional endothelial cell migration by mediating both the activation and recruitment of CDC42 and the reorganization of the actin cytoskeleton at the cell leading edge. Promotes filipodia formation. Functions synergistically with PELP1 as a transcriptional coactivator of estrogen receptor-responsive genes. Stimulates histone acetyltransferase activity. Binds to chromatin. Plays a regulatory role in autophagic activity. In complex with PHAF1, associates with the preautophagosomal structure during both non-selective and selective autophagy. Probably binds phosphatidylinositol 3-phosphate (PtdIns3P) which would mediate the recruitment preautophagosomal structures. The protein is BCAS3 microtubule associated cell migration factor of Homo sapiens (Human).